We begin with the raw amino-acid sequence, 211 residues long: Thiamine-phosphate synthase (211 aa).

Residues 36 to 40 (QLREK) and Asn-68 contribute to the 4-amino-2-methyl-5-(diphosphooxymethyl)pyrimidine site. Residues Asp-69 and Asp-88 each contribute to the Mg(2+) site. Ser-107 lines the 4-amino-2-methyl-5-(diphosphooxymethyl)pyrimidine pocket. 133-135 (TGS) is a binding site for 2-[(2R,5Z)-2-carboxy-4-methylthiazol-5(2H)-ylidene]ethyl phosphate. Lys-136 lines the 4-amino-2-methyl-5-(diphosphooxymethyl)pyrimidine pocket. Residues Gly-167 and 187 to 188 (IT) contribute to the 2-[(2R,5Z)-2-carboxy-4-methylthiazol-5(2H)-ylidene]ethyl phosphate site.

The protein belongs to the thiamine-phosphate synthase family. The cofactor is Mg(2+).

The catalysed reaction is 2-[(2R,5Z)-2-carboxy-4-methylthiazol-5(2H)-ylidene]ethyl phosphate + 4-amino-2-methyl-5-(diphosphooxymethyl)pyrimidine + 2 H(+) = thiamine phosphate + CO2 + diphosphate. The enzyme catalyses 2-(2-carboxy-4-methylthiazol-5-yl)ethyl phosphate + 4-amino-2-methyl-5-(diphosphooxymethyl)pyrimidine + 2 H(+) = thiamine phosphate + CO2 + diphosphate. It catalyses the reaction 4-methyl-5-(2-phosphooxyethyl)-thiazole + 4-amino-2-methyl-5-(diphosphooxymethyl)pyrimidine + H(+) = thiamine phosphate + diphosphate. The protein operates within cofactor biosynthesis; thiamine diphosphate biosynthesis; thiamine phosphate from 4-amino-2-methyl-5-diphosphomethylpyrimidine and 4-methyl-5-(2-phosphoethyl)-thiazole: step 1/1. Its function is as follows. Condenses 4-methyl-5-(beta-hydroxyethyl)thiazole monophosphate (THZ-P) and 2-methyl-4-amino-5-hydroxymethyl pyrimidine pyrophosphate (HMP-PP) to form thiamine monophosphate (TMP). This is Thiamine-phosphate synthase from Haloarcula marismortui (strain ATCC 43049 / DSM 3752 / JCM 8966 / VKM B-1809) (Halobacterium marismortui).